Consider the following 255-residue polypeptide: 5-oxoprolinase subunit A (255 aa).

It belongs to the LamB/PxpA family. Forms a complex composed of PxpA, PxpB and PxpC.

It catalyses the reaction 5-oxo-L-proline + ATP + 2 H2O = L-glutamate + ADP + phosphate + H(+). Functionally, catalyzes the cleavage of 5-oxoproline to form L-glutamate coupled to the hydrolysis of ATP to ADP and inorganic phosphate. In Campylobacter jejuni subsp. jejuni serotype O:6 (strain 81116 / NCTC 11828), this protein is 5-oxoprolinase subunit A.